Here is an 845-residue protein sequence, read N- to C-terminus: Extended synaptotagmin-2 (845 aa).

Residues 1 to 17 (MSSAGGEGPEAGPGRAG) show a composition bias toward gly residues. Residues 1-26 (MSSAGGEGPEAGPGRAGGRSEPEAPG) form a disordered region. Over 1-27 (MSSAGGEGPEAGPGRAGGRSEPEAPGS) the chain is Cytoplasmic. A helical transmembrane segment spans residues 28–48 (ALSVDLPGLLGQLARSFALLL). At 49-51 (PVY) the chain is on the lumenal side. Residues 52–72 (ALGYLGLSFSWVLLALGLLAW) traverse the membrane as a helical segment. The Cytoplasmic segment spans residues 73–845 (CRRSRGLKAS…EDGTRPQVIT (773 aa)). Positions 115 to 294 (DTERAEWLNK…LPNRITVPLV (180 aa)) constitute an SMP-LTD domain. C2 domains are found at residues 293 to 413 (LVSE…DEWF) and 442 to 563 (VLAD…QLSN). Residues lysine 324, aspartate 325, aspartate 337, aspartate 384, glutamate 385, aspartate 386, aspartate 388, aspartate 390, and aspartate 391 each coordinate Ca(2+). Positions 584 to 664 (QERPPDYQHS…RDLGRSSSSL (81 aa)) are disordered. Over residues 612-628 (SQMSASPGTGGANTAPS) the composition is skewed to polar residues. A phosphoserine mark is found at serine 615 and serine 617. Threonine 629 is subject to Phosphothreonine. Over residues 634–645 (VDDKPAMEEKPQ) the composition is skewed to basic and acidic residues. Residues serine 660, serine 662, serine 663, serine 667, serine 679, serine 682, and serine 685 each carry the phosphoserine modification. The 123-residue stretch at 710 to 832 (PLGQIQLTIR…ELAKGWTQWY (123 aa)) folds into the C2 3 domain. The segment at 757–764 (KRRSGRRK) is required for phosphatidylinositol 4,5-bisphosphate-dependent location at the cell membrane.

This sequence belongs to the extended synaptotagmin family. Homodimer. Interacts with ESYT1 and ESYT3. Interacts with FGFR1 that has been activated by FGF1 binding. Interacts with the AP-2 complex; identified in a complex with the AP-2 complex and FGFR1.

It is found in the cell membrane. The protein localises to the endoplasmic reticulum membrane. Its function is as follows. Tethers the endoplasmic reticulum to the cell membrane and promotes the formation of appositions between the endoplasmic reticulum and the cell membrane. Binds glycerophospholipids in a barrel-like domain and may play a role in cellular lipid transport. Plays a role in FGF signaling via its role in the rapid internalization of FGFR1 that has been activated by FGF1 binding; this occurs most likely via the AP-2 complex. Promotes the localization of SACM1L at endoplasmic reticulum-plasma membrane contact sites (EPCS). The chain is Extended synaptotagmin-2 (Esyt2) from Mus musculus (Mouse).